The primary structure comprises 255 residues: Imidazole glycerol phosphate synthase subunit HisF (255 aa).

Active-site residues include Asp12 and Asp131.

Belongs to the HisA/HisF family. Heterodimer of HisH and HisF.

It is found in the cytoplasm. The enzyme catalyses 5-[(5-phospho-1-deoxy-D-ribulos-1-ylimino)methylamino]-1-(5-phospho-beta-D-ribosyl)imidazole-4-carboxamide + L-glutamine = D-erythro-1-(imidazol-4-yl)glycerol 3-phosphate + 5-amino-1-(5-phospho-beta-D-ribosyl)imidazole-4-carboxamide + L-glutamate + H(+). The protein operates within amino-acid biosynthesis; L-histidine biosynthesis; L-histidine from 5-phospho-alpha-D-ribose 1-diphosphate: step 5/9. In terms of biological role, IGPS catalyzes the conversion of PRFAR and glutamine to IGP, AICAR and glutamate. The HisF subunit catalyzes the cyclization activity that produces IGP and AICAR from PRFAR using the ammonia provided by the HisH subunit. This Neisseria meningitidis serogroup C / serotype 2a (strain ATCC 700532 / DSM 15464 / FAM18) protein is Imidazole glycerol phosphate synthase subunit HisF.